The primary structure comprises 90 residues: UPF0512 protein L (90 aa).

This sequence belongs to the UPF0512 family.

In Dictyostelium discoideum (Social amoeba), this protein is UPF0512 protein L.